Reading from the N-terminus, the 101-residue chain is Small ribosomal subunit protein uS14 (101 aa).

It belongs to the universal ribosomal protein uS14 family. As to quaternary structure, part of the 30S ribosomal subunit. Contacts proteins S3 and S10.

Binds 16S rRNA, required for the assembly of 30S particles and may also be responsible for determining the conformation of the 16S rRNA at the A site. This chain is Small ribosomal subunit protein uS14, found in Shewanella halifaxensis (strain HAW-EB4).